The chain runs to 490 residues: Cytochrome P450 71B29 (490 aa).

The helical transmembrane segment at 1–21 threads the bilayer; sequence MAIILCFLILLPLILIFLKKL. Cys-440 contributes to the heme binding site.

Belongs to the cytochrome P450 family. Requires heme as cofactor.

Its subcellular location is the membrane. In Arabidopsis thaliana (Mouse-ear cress), this protein is Cytochrome P450 71B29 (CYP71B29).